A 618-amino-acid polypeptide reads, in one-letter code: uncharacterized protein (618 aa).

Residues 18-47 (SCQRCRQRKIKCDRLHPCFQCVKSNSQCFY) constitute a DNA-binding region (zn(2)-C6 fungal-type). Serine 598 carries the phosphoserine modification.

It localises to the nucleus. This is an uncharacterized protein from Schizosaccharomyces pombe (strain 972 / ATCC 24843) (Fission yeast).